The primary structure comprises 21 residues: Natriuretic peptide TsNP (21 aa).

A disulfide bond links C5 and C21.

As to expression, expressed by the venom gland.

The protein resides in the secreted. Functionally, scorpion venom natriuretic peptide that increases the perfusion pressure, glomerular filtration rate and urinary flow in the isolated perfused rat kidney assay. Induces a decrease of the percentages of renal transport for sodium, potassium and chloride and an increase of the urinary cGMP concentration. Also down-regulates the mRNA expression of natriuretic peptide receptor 1 (NPR1) in the kidneys whereas it up-regulates those of NPR2, NPR3 and guanylyl cyclase C (GUCY2C) mRNAs. May exhibit hypotensive and vasodepressor activities. This is Natriuretic peptide TsNP from Tityus serrulatus (Brazilian scorpion).